A 227-amino-acid polypeptide reads, in one-letter code: N-acetyltransferase family 8 member 7 (227 aa).

2 consecutive transmembrane segments (helical) span residues 36 to 56 (MLLL…LFLA) and 58 to 78 (GSWL…WFLA). The region spanning 61–220 (LLVLLSILTL…PMINLKYSLT (160 aa)) is the N-acetyltransferase domain.

The protein belongs to the camello family.

Its subcellular location is the membrane. It carries out the reaction L-lysyl-[protein] + acetyl-CoA = N(6)-acetyl-L-lysyl-[protein] + CoA + H(+). Has histone acetyltransferase activity in vitro, with specificity for histone H4. This Mus musculus (Mouse) protein is N-acetyltransferase family 8 member 7.